We begin with the raw amino-acid sequence, 327 residues long: Lipoyl synthase (327 aa).

[4Fe-4S] cluster is bound by residues Cys66, Cys71, Cys77, Cys92, Cys96, Cys99, and Ser306. The region spanning 78–295 (FSKGTATFMI…EKEAYELGFT (218 aa)) is the Radical SAM core domain.

The protein belongs to the radical SAM superfamily. Lipoyl synthase family. It depends on [4Fe-4S] cluster as a cofactor.

It localises to the cytoplasm. It carries out the reaction [[Fe-S] cluster scaffold protein carrying a second [4Fe-4S](2+) cluster] + N(6)-octanoyl-L-lysyl-[protein] + 2 oxidized [2Fe-2S]-[ferredoxin] + 2 S-adenosyl-L-methionine + 4 H(+) = [[Fe-S] cluster scaffold protein] + N(6)-[(R)-dihydrolipoyl]-L-lysyl-[protein] + 4 Fe(3+) + 2 hydrogen sulfide + 2 5'-deoxyadenosine + 2 L-methionine + 2 reduced [2Fe-2S]-[ferredoxin]. The protein operates within protein modification; protein lipoylation via endogenous pathway; protein N(6)-(lipoyl)lysine from octanoyl-[acyl-carrier-protein]: step 2/2. Its function is as follows. Catalyzes the radical-mediated insertion of two sulfur atoms into the C-6 and C-8 positions of the octanoyl moiety bound to the lipoyl domains of lipoate-dependent enzymes, thereby converting the octanoylated domains into lipoylated derivatives. This Neisseria gonorrhoeae (strain ATCC 700825 / FA 1090) protein is Lipoyl synthase.